Consider the following 391-residue polypeptide: MYQTLTITAAQGPLGYDPSPGTFMHSAASSPVYVPTSRVGSMLTSISYLQGTGASQGTHSVNSHWSQATSESSSYSSSSPHPSSRYHYSPSPPMANGSTRDTGYSSSLAVSGRDQYAPLARPLNGSYGSPYTPYMTPQLTSAWPAGPFDNTMLHSLQSRGAPISVRGAPGDVLDELPESRECVNCGSVQTPLWRRDGTGHYLCNACGLYSKMNGLSRPLIKPQKRVPSSRRIGLACANCHTTTTTLWRRNTEGEPVCNACGLYMKLHGVPRPLAMKKEGIQTRKRKPKNLNKSKSSSSNGNSSHHITMTPTSTTSSTNSDDCIKNGSPSQNTAPVVTSSLMSAQQTGSASPDSNILKYTGQDGLYSAVSLSSASEVAASVRQDSWCALALA.

Polar residues predominate over residues 57 to 69; the sequence is GTHSVNSHWSQAT. Positions 57 to 107 are disordered; sequence GTHSVNSHWSQATSESSSYSSSSPHPSSRYHYSPSPPMANGSTRDTGYSSS. Over residues 70–89 the composition is skewed to low complexity; the sequence is SESSSYSSSSPHPSSRYHYS. The segment covering 96–107 has biased composition (polar residues); the sequence is NGSTRDTGYSSS. GATA-type zinc fingers lie at residues 182–206 and 236–260; these read CVNCGSVQTPLWRRDGTGHYLCNAC and CANCHTTTTTLWRRNTEGEPVCNAC. A disordered region spans residues 277 to 334; the sequence is KEGIQTRKRKPKNLNKSKSSSSNGNSSHHITMTPTSTTSSTNSDDCIKNGSPSQNTAP. The segment covering 282–291 has biased composition (basic residues); that stretch reads TRKRKPKNLN. Residues 292–319 are compositionally biased toward low complexity; sequence KSKSSSSNGNSSHHITMTPTSTTSSTNS.

In embryos, expressed in the presumptive heart mesoderm. In adults, widely distributed but predominant in the heart.

Its subcellular location is the nucleus. Its function is as follows. Transcriptional activator that binds 5'-GATA-3'-containing motifs within gene promoters. Regulates cardiac-specific transcription during embryogenesis and thereby cardiogenesis. The chain is GATA-binding factor 6-B (gata6-b) from Xenopus laevis (African clawed frog).